The following is an 879-amino-acid chain: Alanine--tRNA ligase (879 aa).

Positions 426–449 (KQKERARNARGNMDGESWKEDPLS) are disordered. Residues His566, His570, Cys668, and His672 each contribute to the Zn(2+) site.

This sequence belongs to the class-II aminoacyl-tRNA synthetase family. It depends on Zn(2+) as a cofactor.

It localises to the cytoplasm. It catalyses the reaction tRNA(Ala) + L-alanine + ATP = L-alanyl-tRNA(Ala) + AMP + diphosphate. Catalyzes the attachment of alanine to tRNA(Ala) in a two-step reaction: alanine is first activated by ATP to form Ala-AMP and then transferred to the acceptor end of tRNA(Ala). Also edits incorrectly charged Ser-tRNA(Ala) and Gly-tRNA(Ala) via its editing domain. The chain is Alanine--tRNA ligase from Clostridioides difficile (strain 630) (Peptoclostridium difficile).